The chain runs to 453 residues: Zinc finger CCCH domain-containing protein 26 (453 aa).

The segment covering 1–15 (MSETQQQVQNSTGSI) has biased composition (polar residues). The interval 1–47 (MSETQQQVQNSTGSIRSPDKIEDTFRRMKVNEDNMEQSSPYPDRPGE) is disordered. At S2 the chain carries N-acetylserine. Basic and acidic residues predominate over residues 17–32 (SPDKIEDTFRRMKVNE). C3H1-type zinc fingers lie at residues 44-72 (RPGE…HPLT), 95-112 (ETGA…HPKD), 129-157 (RQGE…HPHP), 261-289 (FSER…HPKE), and 307-335 (RPGQ…HSML). A compositionally biased stretch (polar residues) spans 360 to 379 (STNLRISSPPSPSDMTTLSN). Residues 360 to 453 (STNLRISSPP…KVQDSSDKST (94 aa)) form a disordered region. The segment covering 391-407 (ETEKQDDSPTEPEKSEV) has biased composition (basic and acidic residues). Positions 413–422 (PNGSDSTSLP) are enriched in polar residues. Residues 441-453 (DSSKVQDSSDKST) are compositionally biased toward basic and acidic residues.

The protein resides in the nucleus. The chain is Zinc finger CCCH domain-containing protein 26 (ZFN2) from Arabidopsis thaliana (Mouse-ear cress).